Reading from the N-terminus, the 515-residue chain is MSTSSSVTQKNLDTNAEALKKEDKVLSEFDIQDERPKSLLWESAFVGVLCSAQLMTQAGLGQSLAPLHIIGNSFGTTNAGQLSWFASAYSLTVGTFILIAGRLGDIFGHKKFFVLGFFWYALWSLLAGFSVYSNQIFFDCCRAFQGMGPAFLLPNAIAILGRTYKPGRRKNMVFSLFGASAPGGFFLGAVFSSMLGQLAWWPWAYWIMGIACFVLAVAGYFVIPHTPMPSRDASSFKLLERIDFAGSVTGVVGLILFNFAWNQGPVVGWQTPYTYALLIVGTFFLVIFAYIESRAAFPLLPFAALSSDTAFVLSCIAAGWASFGIWIFYTWQFMEDSRGQTPLLSSAQFSPVAISGFCAAVTTGFLLSHTPPSTVMLFAMTAFTVGTILIATAPVHQTYWAQTFVSIIVMPWGMDMSFPAATIMLSDSMPHEHQGLAASLVNTVVNYSISIGLGIAGTIESRVNDGGAKPLKGYRCSWYMGIGLSGLGIFVAATYAWSTFMKSKKRISEKQHFIE.

Residues 1–78 (MSTSSSVTQK…IIGNSFGTTN (78 aa)) are Extracellular-facing. The helical transmembrane segment at 79–99 (AGQLSWFASAYSLTVGTFILI) threads the bilayer. The Cytoplasmic portion of the chain corresponds to 100–111 (AGRLGDIFGHKK). The helical transmembrane segment at 112 to 132 (FFVLGFFWYALWSLLAGFSVY) threads the bilayer. At 133 to 140 (SNQIFFDC) the chain is on the extracellular side. Residues 141-161 (CRAFQGMGPAFLLPNAIAILG) form a helical membrane-spanning segment. Over 162 to 171 (RTYKPGRRKN) the chain is Cytoplasmic. Residues 172 to 192 (MVFSLFGASAPGGFFLGAVFS) traverse the membrane as a helical segment. The Extracellular portion of the chain corresponds to 193–202 (SMLGQLAWWP). A helical transmembrane segment spans residues 203 to 223 (WAYWIMGIACFVLAVAGYFVI). Residues 224-241 (PHTPMPSRDASSFKLLER) are Cytoplasmic-facing. Residues 242 to 262 (IDFAGSVTGVVGLILFNFAWN) form a helical membrane-spanning segment. Residues 263-270 (QGPVVGWQ) lie on the Extracellular side of the membrane. A helical transmembrane segment spans residues 271–291 (TPYTYALLIVGTFFLVIFAYI). Topologically, residues 292 to 310 (ESRAAFPLLPFAALSSDTA) are cytoplasmic. A helical transmembrane segment spans residues 311–331 (FVLSCIAAGWASFGIWIFYTW). The Extracellular segment spans residues 332–346 (QFMEDSRGQTPLLSS). A helical membrane pass occupies residues 347–367 (AQFSPVAISGFCAAVTTGFLL). The Cytoplasmic portion of the chain corresponds to 368-374 (SHTPPST). The helical transmembrane segment at 375–395 (VMLFAMTAFTVGTILIATAPV) threads the bilayer. Over 396–403 (HQTYWAQT) the chain is Extracellular. Residues 404–424 (FVSIIVMPWGMDMSFPAATIM) form a helical membrane-spanning segment. At 425-435 (LSDSMPHEHQG) the chain is on the cytoplasmic side. A helical transmembrane segment spans residues 436 to 456 (LAASLVNTVVNYSISIGLGIA). The Extracellular portion of the chain corresponds to 457–479 (GTIESRVNDGGAKPLKGYRCSWY). Residues 480–500 (MGIGLSGLGIFVAATYAWSTF) traverse the membrane as a helical segment. Topologically, residues 501–515 (MKSKKRISEKQHFIE) are cytoplasmic.

This sequence belongs to the major facilitator superfamily.

The protein localises to the cell membrane. Functionally, low affinity ammonium transporter of the plasma membrane. May be involved in drug resistance through pumping them out of the cell. The polypeptide is Low affinity ammonium transporter (Saccharomyces cerevisiae (strain ATCC 204508 / S288c) (Baker's yeast)).